The primary structure comprises 185 residues: Lysine-rich arabinogalactan protein 17 (185 aa).

The signal sequence occupies residues 1-21; the sequence is MTRNILLTVTLICIVFITVGG. The tract at residues 25–160 is disordered; that stretch reads ATAPIHSPST…FSPAADDQSG (136 aa). The segment covering 43-68 has biased composition (low complexity); sequence SPAISPAAPTPESTEAPAKTPVEAPV. Positions 69-88 are enriched in pro residues; the sequence is EAPPSPTPASTPQISPPAPS. Positions 111-122 are enriched in basic residues; it reads TKHKKKTKKHKT. The span at 135 to 146 shows a compositional bias: pro residues; sequence PPAPPGEAPGPG. S159 carries the GPI-anchor amidated serine lipid modification. The propeptide at 160–185 is removed in mature form; it reads GAQRISVVIQMVGAAAIAWSLLVLAF.

Belongs to the lysine-rich AGP family. In terms of processing, O-glycosylated on the hydroxyproline residues. Predominantly expressed in open flowers. Also expressed in leaves and stems, and at a lower level in roots.

Its subcellular location is the cell membrane. Functionally, proteoglycan that seems to be implicated in diverse developmental roles such as differentiation, cell-cell recognition, embryogenesis and programmed cell death. This is Lysine-rich arabinogalactan protein 17 (AGP17) from Arabidopsis thaliana (Mouse-ear cress).